Here is a 534-residue protein sequence, read N- to C-terminus: CTP synthase (534 aa).

The interval Met1–Leu267 is amidoligase domain. Ser13 serves as a coordination point for CTP. Ser13 serves as a coordination point for UTP. Ser14–Ile19 lines the ATP pocket. Tyr54 is a binding site for L-glutamine. Asp71 lines the ATP pocket. Mg(2+) contacts are provided by Asp71 and Glu141. CTP is bound by residues Asp148–Glu150, Lys188–Gln193, and Lys224. UTP-binding positions include Lys188–Gln193 and Lys224. Arg240–Val242 lines the ATP pocket. One can recognise a Glutamine amidotransferase type-1 domain in the interval Lys292 to Asn534. An L-glutamine-binding site is contributed by Gly354. Cys381 (nucleophile; for glutamine hydrolysis) is an active-site residue. Residues Leu382 to Gln385, Glu405, and Arg463 contribute to the L-glutamine site. Catalysis depends on residues His508 and Glu510.

Belongs to the CTP synthase family. As to quaternary structure, homotetramer.

The catalysed reaction is UTP + L-glutamine + ATP + H2O = CTP + L-glutamate + ADP + phosphate + 2 H(+). It catalyses the reaction L-glutamine + H2O = L-glutamate + NH4(+). The enzyme catalyses UTP + NH4(+) + ATP = CTP + ADP + phosphate + 2 H(+). Its pathway is pyrimidine metabolism; CTP biosynthesis via de novo pathway; CTP from UDP: step 2/2. With respect to regulation, allosterically activated by GTP, when glutamine is the substrate; GTP has no effect on the reaction when ammonia is the substrate. The allosteric effector GTP functions by stabilizing the protein conformation that binds the tetrahedral intermediate(s) formed during glutamine hydrolysis. Inhibited by the product CTP, via allosteric rather than competitive inhibition. Its function is as follows. Catalyzes the ATP-dependent amination of UTP to CTP with either L-glutamine or ammonia as the source of nitrogen. Regulates intracellular CTP levels through interactions with the four ribonucleotide triphosphates. This Streptococcus pyogenes serotype M28 (strain MGAS6180) protein is CTP synthase.